A 395-amino-acid chain; its full sequence is S-adenosylmethionine synthase (395 aa).

Position 14 (His14) interacts with ATP. Asp16 serves as a coordination point for Mg(2+). Position 42 (Glu42) interacts with K(+). L-methionine-binding residues include Glu55 and Gln98. Residues 98–108 (QSPDIAMGVDK) are flexible loop. ATP-binding positions include 175-177 (DGK), 242-243 (RF), Asp251, 257-258 (RK), Ala274, and Lys278. Asp251 provides a ligand contact to L-methionine. Residue Lys282 coordinates L-methionine.

Belongs to the AdoMet synthase family. As to quaternary structure, homotetramer; dimer of dimers. Mg(2+) is required as a cofactor. It depends on K(+) as a cofactor.

It is found in the cytoplasm. It carries out the reaction L-methionine + ATP + H2O = S-adenosyl-L-methionine + phosphate + diphosphate. Its pathway is amino-acid biosynthesis; S-adenosyl-L-methionine biosynthesis; S-adenosyl-L-methionine from L-methionine: step 1/1. Its function is as follows. Catalyzes the formation of S-adenosylmethionine (AdoMet) from methionine and ATP. The overall synthetic reaction is composed of two sequential steps, AdoMet formation and the subsequent tripolyphosphate hydrolysis which occurs prior to release of AdoMet from the enzyme. This Thermosipho melanesiensis (strain DSM 12029 / CIP 104789 / BI429) protein is S-adenosylmethionine synthase.